The following is a 287-amino-acid chain: Universal stress protein Slr1230 (287 aa).

The protein belongs to the universal stress protein A family.

This Synechocystis sp. (strain ATCC 27184 / PCC 6803 / Kazusa) protein is Universal stress protein Slr1230.